A 544-amino-acid polypeptide reads, in one-letter code: Exodeoxyribonuclease 7 large subunit (544 aa).

A disordered region spans residues 522 to 544 (PETPPKSRKADNPPEPPEQTSFL).

This sequence belongs to the XseA family. Heterooligomer composed of large and small subunits.

It is found in the cytoplasm. The enzyme catalyses Exonucleolytic cleavage in either 5'- to 3'- or 3'- to 5'-direction to yield nucleoside 5'-phosphates.. Bidirectionally degrades single-stranded DNA into large acid-insoluble oligonucleotides, which are then degraded further into small acid-soluble oligonucleotides. In Zymomonas mobilis subsp. mobilis (strain ATCC 31821 / ZM4 / CP4), this protein is Exodeoxyribonuclease 7 large subunit.